A 68-amino-acid chain; its full sequence is Large ribosomal subunit protein bL35 (68 aa).

The protein belongs to the bacterial ribosomal protein bL35 family.

The protein is Large ribosomal subunit protein bL35 of Rickettsia canadensis (strain McKiel).